A 353-amino-acid chain; its full sequence is MEKTLETVPLERKKREKEQFRKLFIGGLSFETTEESLRNYYEQWGKLTDCVVMRDPASKRSRGFGFVTFSSMAEVDAAMAARPHSIDGRVVEPKRAVAREESGKPGAHVTVKKLFVGGIKEDTEEHHLRDYFEEYGKIDTIEIITDRQSGKKRGFGFVTFDDHDPVDKIVLQKYHTINGHNAEVRKALSRQEMQEVQSSRSGRGGNFGFGDSRGGGGNFGPGPGSNFRGGSDGYGSGRGFGDGYNGYGGGPGGGNFGGSPGYGGGRGGYGGGGPGYGNQGGGYGGGYDNYGGGNYGSGNYNDFGNYNQQPSNYGPMKSGNFGGSRNMGGPYGGGNYGPGGSGGSGGYGGRSRY.

Met-1 is subject to N-acetylmethionine. At Thr-4 the chain carries Phosphothreonine. Residue Leu-5 forms a Glycyl lysine isopeptide (Lys-Gly) (interchain with G-Cter in SUMO2) linkage. The short motif at 9–15 (PLERKKR) is the Nuclear localization signal element. RRM domains are found at residues 21-104 (RKLF…ESGK) and 112-191 (KKLF…LSRQ). Lys-22 is covalently cross-linked (Glycyl lysine isopeptide (Lys-Gly) (interchain with G-Cter in SUMO2)). Ser-29 is subject to Phosphoserine. Arg-38 is modified (omega-N-methylarginine). Residue Ser-85 is modified to Phosphoserine. The residue at position 104 (Lys-104) is an N6,N6-dimethyllysine; alternate. Residue Lys-104 forms a Glycyl lysine isopeptide (Lys-Gly) (interchain with G-Cter in SUMO2); alternate linkage. Glycyl lysine isopeptide (Lys-Gly) (interchain with G-Cter in SUMO2) cross-links involve residues Lys-112, Lys-120, and Lys-137. Thr-140 is subject to Phosphothreonine. Residue Ser-149 is modified to Phosphoserine. Lys-152 participates in a covalent cross-link: Glycyl lysine isopeptide (Lys-Gly) (interchain with G-Cter in SUMO2). A Phosphothreonine modification is found at Thr-159. Glycyl lysine isopeptide (Lys-Gly) (interchain with G-Cter in SUMO2); alternate cross-links involve residues Lys-168 and Lys-173. 2 positions are modified to N6-acetyllysine; alternate: Lys-168 and Lys-173. A Phosphothreonine modification is found at Thr-176. A Glycyl lysine isopeptide (Lys-Gly) (interchain with G-Cter in SUMO2) cross-link involves residue Lys-186. 2 positions are modified to phosphoserine: Ser-189 and Ser-201. A disordered region spans residues 193 to 353 (MQEVQSSRSG…SGGYGGRSRY (161 aa)). Gly residues predominate over residues 202 to 223 (GRGGNFGFGDSRGGGGNFGPGP). Arg-203 carries the post-translational modification Asymmetric dimethylarginine; alternate. A Dimethylated arginine; alternate modification is found at Arg-203. Residue Arg-203 is modified to Omega-N-methylarginine; alternate. Ser-212 is modified (phosphoserine). Arg-213 carries the post-translational modification Asymmetric dimethylarginine; alternate. A Dimethylated arginine; alternate modification is found at Arg-213. Arg-213 bears the Omega-N-methylarginine; alternate mark. A Phosphoserine modification is found at Ser-225. The residue at position 228 (Arg-228) is an Omega-N-methylarginine. Residues Ser-231 and Ser-236 each carry the phosphoserine modification. Arg-238 is subject to Omega-N-methylarginine. Ser-259 carries the phosphoserine modification. Asymmetric dimethylarginine; alternate is present on Arg-266. Position 266 is an omega-N-methylarginine; alternate (Arg-266). The tract at residues 308–347 (QQPSNYGPMKSGNFGGSRNMGGPYGGGNYGPGGSGGSGGY) is nuclear targeting sequence. Positions 320 to 353 (NFGGSRNMGGPYGGGNYGPGGSGGSGGYGGRSRY) are enriched in gly residues. Ser-324 bears the Phosphoserine mark. Arg-325 is subject to Omega-N-methylarginine. Tyr-331 carries the post-translational modification Phosphotyrosine. Ser-341 and Ser-344 each carry phosphoserine. Tyr-347 bears the Phosphotyrosine mark. Arg-350 carries the post-translational modification Omega-N-methylarginine.

As to quaternary structure, homodimer; dimerization is required for nucleocytoplasmic translocation. Identified in the spliceosome C complex. Identified in a IGF2BP1-dependent mRNP granule complex containing untranslated mRNAs. Interacts with IGF2BP1. Interacts with C9orf72. Interacts with DGCR8. Interacts with TARDBP. Interacts with CKAP5. Interacts with TBK1. Interacts with STING1. Interacts with SRC. Interacts with PPIA/CYPA. Interacts (via C-terminus) with FAM76B; the interaction results in retention of HNRNPA2B1 in the nucleus and inhibition of the NF-kappa-B-mediated inflammatory pathway. Interacts with NF-kappa-B inhibitors NFKBIA and NFKBIE; the interaction may be mediated by the RRM2 domain of HNRNPA2B1, and HNRNPA2B1 may interact simultaneously with FAM76B and either NFKBIA or NFKBIE to form a complex. In terms of processing, sumoylated in exosomes, promoting miRNAs-binding. Asymmetric dimethylation at Arg-266 constitutes the major methylation site. According to a report, methylation affects subcellular location and promotes nuclear localization. According to another report, methylation at Arg-266 does not influence nucleocytoplasmic shuttling.

The protein localises to the nucleus. Its subcellular location is the nucleoplasm. It is found in the cytoplasm. The protein resides in the cytoplasmic granule. It localises to the secreted. The protein localises to the extracellular exosome. In terms of biological role, heterogeneous nuclear ribonucleoprotein (hnRNP) that associates with nascent pre-mRNAs, packaging them into hnRNP particles. The hnRNP particle arrangement on nascent hnRNA is non-random and sequence-dependent and serves to condense and stabilize the transcripts and minimize tangling and knotting. Packaging plays a role in various processes such as transcription, pre-mRNA processing, RNA nuclear export, subcellular location, mRNA translation and stability of mature mRNAs. Forms hnRNP particles with at least 20 other different hnRNP and heterogeneous nuclear RNA in the nucleus. Involved in transport of specific mRNAs to the cytoplasm in oligodendrocytes and neurons: acts by specifically recognizing and binding the A2RE (21 nucleotide hnRNP A2 response element) or the A2RE11 (derivative 11 nucleotide oligonucleotide) sequence motifs present on some mRNAs, and promotes their transport to the cytoplasm. Specifically binds single-stranded telomeric DNA sequences, protecting telomeric DNA repeat against endonuclease digestion. Also binds other RNA molecules, such as primary miRNA (pri-miRNAs): acts as a nuclear 'reader' of the N6-methyladenosine (m6A) mark by specifically recognizing and binding a subset of nuclear m6A-containing pri-miRNAs. Binding to m6A-containing pri-miRNAs promotes pri-miRNA processing by enhancing binding of DGCR8 to pri-miRNA transcripts. Involved in miRNA sorting into exosomes following sumoylation, possibly by binding (m6A)-containing pre-miRNAs. Acts as a regulator of efficiency of mRNA splicing, possibly by binding to m6A-containing pre-mRNAs. Plays a role in the splicing of pyruvate kinase PKM by binding repressively to sequences flanking PKM exon 9, inhibiting exon 9 inclusion and resulting in exon 10 inclusion and production of the PKM M2 isoform. Also plays a role in the activation of the innate immune response. Mechanistically, senses the presence of viral DNA in the nucleus, homodimerizes and is demethylated by JMJD6. In turn, translocates to the cytoplasm where it activates the TBK1-IRF3 pathway, leading to interferon alpha/beta production. (Microbial infection) Involved in the transport of HIV-1 genomic RNA out of the nucleus, to the microtubule organizing center (MTOC), and then from the MTOC to the cytoplasm: acts by specifically recognizing and binding the A2RE (21 nucleotide hnRNP A2 response element) sequence motifs present on HIV-1 genomic RNA, and promotes its transport. This chain is Heterogeneous nuclear ribonucleoproteins A2/B1 (HNRNPA2B1), found in Homo sapiens (Human).